Here is a 264-residue protein sequence, read N- to C-terminus: ELL-associated factor 2 (264 aa).

Disordered stretches follow at residues 114–154 (EGSS…PSSP) and 169–264 (MDQL…DSDD). Polar residues predominate over residues 117–142 (SKVQSRIEQQQQQIRNSSKTPNNIKN). A compositionally biased stretch (low complexity) spans 173-196 (SSSDSSSDSKSSSSSSSSSENSSS). The segment covering 228–238 (VPDKDASHNRS) has biased composition (basic and acidic residues). Residues 239–264 (QENSGHMMNTLRSDLQLSESGSDSDD) show a composition bias toward polar residues.

Belongs to the EAF family.

Its subcellular location is the nucleus speckle. Its function is as follows. May act as a transcriptional transactivator. The sequence is that of ELL-associated factor 2 (EAF2) from Gallus gallus (Chicken).